A 197-amino-acid polypeptide reads, in one-letter code: Phosphoheptose isomerase (197 aa).

In terms of domain architecture, SIS spans 36-197 (MVNALLNEGK…IDSQLFGSEE (162 aa)). Residue 51–53 (NGG) participates in substrate binding. Zn(2+)-binding residues include His-60 and Glu-64. Residues Glu-64, 93–94 (ND), 119–121 (STS), Ser-124, and Gln-174 each bind substrate. The Zn(2+) site is built by Gln-174 and His-182.

It belongs to the SIS family. GmhA subfamily. As to quaternary structure, homotetramer. Zn(2+) serves as cofactor.

The protein localises to the cytoplasm. The catalysed reaction is 2 D-sedoheptulose 7-phosphate = D-glycero-alpha-D-manno-heptose 7-phosphate + D-glycero-beta-D-manno-heptose 7-phosphate. The protein operates within carbohydrate biosynthesis; D-glycero-D-manno-heptose 7-phosphate biosynthesis; D-glycero-alpha-D-manno-heptose 7-phosphate and D-glycero-beta-D-manno-heptose 7-phosphate from sedoheptulose 7-phosphate: step 1/1. In terms of biological role, catalyzes the isomerization of sedoheptulose 7-phosphate in D-glycero-D-manno-heptose 7-phosphate. The polypeptide is Phosphoheptose isomerase (Pseudomonas putida (strain GB-1)).